The chain runs to 641 residues: Isomalto-dextranase (641 aa).

Residues 1–39 constitute a signal peptide (tat-type signal); the sequence is MMNLSRRTLLTTGSAATLAYALGMAGSAQAATAVTARPG. Asp-227 serves as the catalytic Nucleophile. Asp-288 (proton donor) is an active-site residue. Positions 500–640 constitute a CBM6 domain; the sequence is TRYPAAFAAW…AINLNWIELD (141 aa). The tract at residues 556–588 is disordered; the sequence is SGYRYANATDDNTTSKTTTKKANPEKADRSTVD. Over residues 561–576 the composition is skewed to low complexity; sequence ANATDDNTTSKTTTKK. Over residues 577 to 586 the composition is skewed to basic and acidic residues; sequence ANPEKADRST.

Belongs to the glycosyl hydrolase 27 family. Predicted to be exported by the Tat system. The position of the signal peptide cleavage has been experimentally proven.

It localises to the secreted. The enzyme catalyses Hydrolysis of (1-&gt;6)-alpha-D-glucosidic linkages in polysaccharides, to remove successive isomaltose units from the non-reducing ends of the chains.. This Arthrobacter globiformis protein is Isomalto-dextranase (imd).